We begin with the raw amino-acid sequence, 134 residues long: ATP synthase epsilon chain (134 aa).

This sequence belongs to the ATPase epsilon chain family. As to quaternary structure, F-type ATPases have 2 components, CF(1) - the catalytic core - and CF(0) - the membrane proton channel. CF(1) has five subunits: alpha(3), beta(3), gamma(1), delta(1), epsilon(1). CF(0) has three main subunits: a, b and c.

The protein localises to the cellular thylakoid membrane. Its function is as follows. Produces ATP from ADP in the presence of a proton gradient across the membrane. The sequence is that of ATP synthase epsilon chain from Prochlorococcus marinus (strain MIT 9515).